The primary structure comprises 265 residues: Mlc titration factor A (265 aa).

Residues H111, H148, H152, and E211 each coordinate Zn(2+).

Belongs to the MtfA family. In terms of assembly, interacts with Mlc. Zn(2+) serves as cofactor.

The protein localises to the cytoplasm. In terms of biological role, involved in the modulation of the activity of the glucose-phosphotransferase system (glucose-PTS). Interacts with the transcriptional repressor Mlc, preventing its interaction with DNA and leading to the modulation of expression of genes regulated by Mlc, including ptsG, which encodes the PTS system glucose-specific EIICB component. Shows zinc-dependent metallopeptidase activity. The protein is Mlc titration factor A of Escherichia coli O8 (strain IAI1).